Reading from the N-terminus, the 127-residue chain is Fluoride-specific ion channel FluC (127 aa).

Transmembrane regions (helical) follow at residues 4–24 (LLLA…LLSM), 35–55 (LGTL…FAWF), 71–91 (TGFC…VFLL), and 103–123 (VFVN…LFSA). Na(+) contacts are provided by glycine 75 and threonine 78.

This sequence belongs to the fluoride channel Fluc/FEX (TC 1.A.43) family.

Its subcellular location is the cell inner membrane. It catalyses the reaction fluoride(in) = fluoride(out). With respect to regulation, na(+) is not transported, but it plays an essential structural role and its presence is essential for fluoride channel function. Fluoride-specific ion channel. Important for reducing fluoride concentration in the cell, thus reducing its toxicity. The sequence is that of Fluoride-specific ion channel FluC from Shigella flexneri serotype 5b (strain 8401).